The sequence spans 229 residues: Heptaprenylglyceryl phosphate synthase (229 aa).

A sn-glycerol 1-phosphate-binding site is contributed by K12. The Mg(2+) site is built by D14 and S40. Sn-glycerol 1-phosphate-binding positions include 159 to 164, G189, and 209 to 210; these read YLEYSG and GN.

Belongs to the GGGP/HepGP synthase family. Group I subfamily. In terms of assembly, homodimer. Requires Mg(2+) as cofactor.

The enzyme catalyses sn-glycerol 1-phosphate + all-trans-heptaprenyl diphosphate = 3-heptaprenyl-sn-glycero-1-phosphate + diphosphate. The protein operates within membrane lipid metabolism; glycerophospholipid metabolism. Its function is as follows. Prenyltransferase that catalyzes in vivo the transfer of the heptaprenyl moiety of heptaprenyl pyrophosphate (HepPP; 35 carbon atoms) to the C3 hydroxyl of sn-glycerol-1-phosphate (G1P), producing heptaprenylglyceryl phosphate (HepGP). This reaction is an ether-bond-formation step in the biosynthesis of archaea-type G1P-based membrane lipids found in Bacillales. The protein is Heptaprenylglyceryl phosphate synthase of Bacillus cereus (strain G9842).